Consider the following 172-residue polypeptide: Endoribonuclease YbeY (172 aa).

Zn(2+) contacts are provided by histidine 134, histidine 138, and histidine 144.

Belongs to the endoribonuclease YbeY family. Zn(2+) serves as cofactor.

The protein localises to the cytoplasm. Functionally, single strand-specific metallo-endoribonuclease involved in late-stage 70S ribosome quality control and in maturation of the 3' terminus of the 16S rRNA. This Burkholderia cenocepacia (strain HI2424) protein is Endoribonuclease YbeY.